Consider the following 248-residue polypeptide: Protein PARTING DANCERS homolog (248 aa).

Residues 1–10 are compositionally biased toward polar residues; it reads MERSTHSTGW. The tract at residues 1–25 is disordered; sequence MERSTHSTGWTCLPPPPPEPAAPGR.

The protein belongs to the ERCC1/RAD10/SWI10 family. As to quaternary structure, interacts with SHOC1 (via C-terminus). Interacts with HEI10. As to expression, highly expressed in anthers and pistil during meiosis. Expressed in pollen mother cells (PMCs) during meiosis. Expressed at low levels in roots, shoots, leaves, flowers, and glumes.

Its subcellular location is the chromosome. The protein localises to the nucleus. The protein resides in the cytoplasm. It is found in the cell membrane. Essential for normal crossover (CO) formation during meiosis. Essential component for the formation of class I meiotic COs. Interacts with SHOC1, another meiotic component, to regulate CO formation, possibly by stabilizing the recombination intermediates during meiosis. PTD and SHOC1 may form transient heterotrimeric or heterotetrameric complexes with HEI10 and/or ZIP4 to promote class I COs formation. Does not seem to be involved in early meiotic recombination steps involving double-strand break (DSB) formation, processing, and single-strand invasion. Does not seem to be involved in homologous pairing or synaptonemal complex (SC) assembly. This is Protein PARTING DANCERS homolog from Oryza sativa subsp. japonica (Rice).